Reading from the N-terminus, the 2326-residue chain is Nonribosomal peptide synthetase inpB (2326 aa).

One can recognise a Carrier 1 domain in the interval 8 to 84 (SPSEWLQLEL…SLYSMAQGPA (77 aa)). S45 is subject to O-(pantetheine 4'-phosphoryl)serine. The interval 87 to 121 (ASSSTSDNASDKDSSLDDSETGALTPTTDAGSSLA) is disordered. Over residues 108 to 121 (GALTPTTDAGSSLA) the composition is skewed to polar residues. Positions 144 to 568 (QAVVPCSAIQ…LLSPGEVSQL (425 aa)) are condensation 1. The tract at residues 593 to 997 (LQPGAAAVNS…GRRDTQVKIR (405 aa)) is adenylation 1. A Carrier 2 domain is found at 1145-1221 (EPSTETEFKL…DLARAVESRV (77 aa)). At S1182 the chain carries O-(pantetheine 4'-phosphoryl)serine. The segment at 1226–1247 (DEEDPAPFSVWRESRGSEPSEE) is disordered. A condensation 2 region spans residues 1266–1680 (EDVLPCTALQ…LLSPEDVNQL (415 aa)). An adenylation 2 region spans residues 1702-2097 (EVARSRPGAA…GRIDTQIKIR (396 aa)). Residues 2216-2294 (PPSTEMEKAL…DLAVLLEKRP (79 aa)) form the Carrier 3 domain. S2253 bears the O-(pantetheine 4'-phosphoryl)serine mark.

Belongs to the NRP synthetase family.

The protein operates within secondary metabolite biosynthesis. In terms of biological role, nonribosomal peptide synthetase; part of the inp gene cluster that mediates the biosynthesis of fellutamide B, a mycotoxin that acts as a proteasome inhibitor. In the first step of fellutabmide B biosynthesis inpC activates 3-hydroxydodecanoic acid to generate 3-hydroxydodecanoyl-AMP that is then loaded onto the T0 domain of inpB. The 3-hydroxydodecanoyl-S-phosphopantetheinyl-T0 is sequentially extended with L-Asn and L-Gln by the two CAT modules of inpB. The linear lipodipeptide from inpB is then transferred onto inpA for the addition of the third amino acid, L-Leu. Reductive releasing of the lipotripeptide by the TE domain of inpA produces (2S)-fellutamide B. InpF might be involved in the release and transfer of the lipodipeptide from inpB to inpA. The inp cluster-encoded proteasome subunit inpE confers resistance to internally produced fellutamides. The MFS efflux transporter inpD may contribute to fellutamide resistance as well. This Emericella nidulans (strain FGSC A4 / ATCC 38163 / CBS 112.46 / NRRL 194 / M139) (Aspergillus nidulans) protein is Nonribosomal peptide synthetase inpB.